The chain runs to 555 residues: Neurofilament light polypeptide (555 aa).

Ser2 is subject to N-acetylserine. Residues 2-93 (SSFSYEPYYS…KSIRTQEKAQ (92 aa)) are head. Arg23 carries the post-translational modification Asymmetric dimethylarginine; alternate. Arg23 is modified (omega-N-methylarginine; alternate). Position 30 is an omega-N-methylarginine (Arg30). Tyr43 bears the Phosphotyrosine mark. 3 positions are modified to phosphoserine: Ser56, Ser67, and Ser103. An IF rod domain is found at 90-401 (EKAQLQDLND…KLLEGEETRL (312 aa)). The segment at 94-125 (LQDLNDRFASFIERVHELEQQNKVLEAELLVL) is coil 1A. The tract at residues 126–138 (RQKHSEPSRFRAL) is linker 1. Residues 139–234 (YEQEIRDLRL…KVHEEEIAEL (96 aa)) are coil 1B. The linker 12 stretch occupies residues 235-253 (QAQIQYAQISVEMDVSSKP). The segment at 254-272 (DLSAALKDIRAQYEKLAAK) is coil 2A. Positions 273-281 (NMQNAEEWF) are linker 2. The segment at 282 to 397 (KSRFTVLTES…AAYRKLLEGE (116 aa)) is coil 2B. The segment at 398–444 (ETRLSFTSVGSLTTGYTQSSQVFGRSAYGGLQTSSYLMSARSFPSYY) is tail, subdomain A. The tract at residues 398 to 555 (ETRLSFTSVG…GEEQATKKKD (158 aa)) is tail. The tail, subdomain B (acidic) stretch occupies residues 445–555 (TSHVQEEQIE…GEEQATKKKD (111 aa)). A disordered region spans residues 463–555 (KAEEAKDEPP…GEEQATKKKD (93 aa)). Positions 472 to 540 (PSEGEAEEEE…ETKEAEEEEK (69 aa)) are enriched in acidic residues. Residue Ser473 is modified to Phosphoserine. The residue at position 532 (Thr532) is a Phosphothreonine. A compositionally biased stretch (basic and acidic residues) spans 541–555 (KDEGAGEEQATKKKD).

This sequence belongs to the intermediate filament family. In terms of assembly, forms homodimers (in vitro). Forms heterodimers with NEFH or NEFM; which can further hetero-oligomerize (in vitro). Forms heterodimers with INA (in vitro). Interacts with ARHGEF28. Interacts with TRIM2. In terms of processing, O-glycosylated. Post-translationally, phosphorylated in the head and rod regions by the PKC kinase PKN1, leading to the inhibition of polymerization. Ubiquitinated in the presence of TRIM2 and UBE2D1.

It localises to the cell projection. Its subcellular location is the axon. The protein localises to the cytoplasm. The protein resides in the cytoskeleton. Neurofilaments usually contain three intermediate filament proteins: NEFL, NEFM, and NEFH which are involved in the maintenance of neuronal caliber. May additionally cooperate with the neuronal intermediate filament proteins PRPH and INA to form neuronal filamentous networks. The chain is Neurofilament light polypeptide (NEFL) from Bos taurus (Bovine).